The following is a 382-amino-acid chain: Tuliposide A-converting enzyme 2, chloroplastic (382 aa).

The N-terminal 74 residues, 1-74 (MSVASFFSSL…PSPSLSPTPT (74 aa)), are a transit peptide targeting the chloroplast. Serine 232 serves as the catalytic Acyl-ester intermediate. Catalysis depends on charge relay system residues aspartate 324 and histidine 356.

This sequence belongs to the AB hydrolase superfamily. In terms of assembly, homodimer. As to expression, expressed in roots, stems, leaves, petals, stamens and pistils, but not in bulb scales.

The protein resides in the plastid. Its subcellular location is the chloroplast. The enzyme catalyses 6-tuliposide A = tulipalin A + D-glucose. With respect to regulation, inhibited by NaF, AgNO(3), HgCl(2), CuSO(4) and phenylmethylsulfonyl fluoride (PMSF). Its function is as follows. Lactone-forming carboxylesterases, specifically catalyzing intramolecular transesterification, but not hydrolysis. Involved in the biosynthesis of tulipalins, defensive chemicals that show antimicrobial activities against a broad range of strains of bacteria and fungi. Substrates are 6-tuliposide A &gt; 6-tuliposide B. The polypeptide is Tuliposide A-converting enzyme 2, chloroplastic (TCEA2) (Tulipa gesneriana (Garden tulip)).